Here is a 297-residue protein sequence, read N- to C-terminus: Probable porphobilinogen deaminase (297 aa).

Cys-241 bears the S-(dipyrrolylmethanemethyl)cysteine mark.

It belongs to the HMBS family. Requires dipyrromethane as cofactor.

The enzyme catalyses 4 porphobilinogen + H2O = hydroxymethylbilane + 4 NH4(+). Its pathway is porphyrin-containing compound metabolism; protoporphyrin-IX biosynthesis; coproporphyrinogen-III from 5-aminolevulinate: step 2/4. Tetrapolymerization of the monopyrrole PBG into the hydroxymethylbilane pre-uroporphyrinogen in several discrete steps. This chain is Probable porphobilinogen deaminase, found in Pyrobaculum arsenaticum (strain DSM 13514 / JCM 11321 / PZ6).